The primary structure comprises 78 residues: Large ribosomal subunit protein bL28 (78 aa).

Residues 1–30 (MAAHCQVTGAGPGFGHSISHSHRRTKRRFD) are disordered.

The protein belongs to the bacterial ribosomal protein bL28 family.

This is Large ribosomal subunit protein bL28 from Micrococcus luteus (strain ATCC 4698 / DSM 20030 / JCM 1464 / CCM 169 / CCUG 5858 / IAM 1056 / NBRC 3333 / NCIMB 9278 / NCTC 2665 / VKM Ac-2230) (Micrococcus lysodeikticus).